A 144-amino-acid chain; its full sequence is MTEKVKKISPRRRARECAVQNLYSWAISKNSPEEIELNFIVDQDNEMKGVDMPYFRKLFHQTINHVETIDSTMAPYLDRDNVELDPIECAILRLAVYELKFELDVPYKVVINEAIEVAKVFGAEESHKYINGVLDKIAPALSRK.

This sequence belongs to the NusB family.

Functionally, involved in transcription antitermination. Required for transcription of ribosomal RNA (rRNA) genes. Binds specifically to the boxA antiterminator sequence of the ribosomal RNA (rrn) operons. The polypeptide is Transcription antitermination protein NusB (Histophilus somni (strain 2336) (Haemophilus somnus)).